The primary structure comprises 512 residues: Probable amidase At4g34880 (512 aa).

Residues lysine 117 and serine 198 each act as charge relay system in the active site. Catalysis depends on serine 222, which acts as the Acyl-ester intermediate.

The protein belongs to the amidase family. In terms of tissue distribution, expressed in vasculature of roots, cotyledons, leaves and sepals.

The catalysed reaction is a monocarboxylic acid amide + H2O = a monocarboxylate + NH4(+). This chain is Probable amidase At4g34880, found in Arabidopsis thaliana (Mouse-ear cress).